Reading from the N-terminus, the 602-residue chain is Aspartate--tRNA(Asp/Asn) ligase (602 aa).

Residue Glu-177 coordinates L-aspartate. The tract at residues 201 to 204 (QLFK) is aspartate. An L-aspartate-binding site is contributed by Arg-223. ATP contacts are provided by residues 223-225 (RDE) and Gln-232. An L-aspartate-binding site is contributed by His-460. Glu-497 contacts ATP. L-aspartate is bound at residue Arg-504. Position 549–552 (549–552 (GLDR)) interacts with ATP.

This sequence belongs to the class-II aminoacyl-tRNA synthetase family. Type 1 subfamily. Homodimer.

It localises to the cytoplasm. It carries out the reaction tRNA(Asx) + L-aspartate + ATP = L-aspartyl-tRNA(Asx) + AMP + diphosphate. Functionally, aspartyl-tRNA synthetase with relaxed tRNA specificity since it is able to aspartylate not only its cognate tRNA(Asp) but also tRNA(Asn). Reaction proceeds in two steps: L-aspartate is first activated by ATP to form Asp-AMP and then transferred to the acceptor end of tRNA(Asp/Asn). This is Aspartate--tRNA(Asp/Asn) ligase from Prochlorococcus marinus (strain MIT 9515).